The sequence spans 141 residues: Vasotocin-neurophysin VT (141 aa).

A disulfide bridge connects residues Cys-1 and Cys-6. Gly-9 carries the glycine amide modification. 7 disulfide bridges follow: Cys-22-Cys-66, Cys-25-Cys-39, Cys-33-Cys-56, Cys-40-Cys-46, Cys-73-Cys-85, Cys-79-Cys-97, and Cys-86-Cys-91. The N-linked (GlcNAc...) asparagine glycan is linked to Asn-117.

Belongs to the vasopressin/oxytocin family. Post-translationally, seven disulfide bonds are present in neurophysin.

It is found in the secreted. In terms of biological role, vasotocin is an antidiuretic hormone. This Pelophylax lessonae (Pool frog) protein is Vasotocin-neurophysin VT.